Reading from the N-terminus, the 523-residue chain is MAIEQIIEEVLPYLTKWYTILFGAAVTYFLSIALRNKFYEYKLKCENPVYFEDAGLFGIPALIDIIKVRKAGQLADYTDTTFDKYPNLSSYMTVAGVLKIVFTVDPENIKAVLATQFNDFALGARHAHFDPLLGDGIFTLDGEGWKLSRAMLRPQFAREQIAHVKALEPHVQILAKQIKLNKGKTFDLQELFFRFTVDTATEFLFGESVHSLYDEKLGIPAPNDIPGRENFAEAFNTSQHYLATRTYSQIFYWLTNPKEFRDCNAKVHKLAQYFVNTALNATEKEVEEKSKGGYVFLYELVKQTRDPKVLQDQLLNIMVAGRDTTAGLLSFAMFELARNPKIWNKLREEVEVNFGLGDEARVDEISFETLKKCEYLKAVLNETLRMYPSVPINFRTATRDTTLPRGGGKDGNSPIFVPKGSSVVYSVYKTHRLKQFYGEDAYEFRPERWFEPSTRKLGWAYLPFNGGPRICLGQQFALTEASYVIARLAQMFEHLESKDETYPPNKCIHLTMNHNEGVFISAK.

A helical transmembrane segment spans residues 17 to 34; the sequence is WYTILFGAAVTYFLSIAL. Residue Cys471 participates in heme binding.

This sequence belongs to the cytochrome P450 family. It depends on heme as a cofactor.

The protein localises to the membrane. Together with an NADPH cytochrome P450 the enzyme system catalyzes the terminal hydroxylation as the first step in the assimilation of alkanes and fatty acids. In Candida maltosa (Yeast), this protein is Cytochrome P450 52A3-A (CYP52A3-A).